Here is a 921-residue protein sequence, read N- to C-terminus: DNA mismatch repair protein MutS 1 (921 aa).

619-626 (GPNMSGKS) contributes to the ATP binding site. The interval 837-887 (FRDGAAQSGGAAAGSTAEPVATDGDPEHAPGEAAAEGPKGDERAASLDSET) is disordered. Low complexity predominate over residues 840 to 853 (GAAQSGGAAAGSTA).

The protein belongs to the DNA mismatch repair MutS family.

In terms of biological role, this protein is involved in the repair of mismatches in DNA. It is possible that it carries out the mismatch recognition step. This protein has a weak ATPase activity. The chain is DNA mismatch repair protein MutS 1 from Haloarcula marismortui (strain ATCC 43049 / DSM 3752 / JCM 8966 / VKM B-1809) (Halobacterium marismortui).